A 601-amino-acid chain; its full sequence is Alpha-terpineol synthase, chloroplastic (601 aa).

The N-terminal 47 residues, 1–47 (MSTISIHHVGILRNPLHSKSKRASINKPWSLSLPRSSSASRLVEPCR), are a transit peptide targeting the chloroplast. Mn(2+)-binding residues include Asp-357 and Asp-361. A DDXXD motif motif is present at residues 357–361 (DDVYD). 2 homodimerization regions span residues 363-369 (YGTLDEL) and 435-471 (EAEW…ELSL). 2 residues coordinate Mn(2+): Asp-499 and Glu-507.

Belongs to the terpene synthase family. In terms of assembly, homodimer. The cofactor is Mn(2+). It depends on Mg(2+) as a cofactor.

The protein localises to the plastid. Its subcellular location is the chloroplast. The catalysed reaction is (2E)-geranyl diphosphate + H2O = (S)-alpha-terpineol + diphosphate. It carries out the reaction (2E)-geranyl diphosphate + H2O = (R)-alpha-terpineol + diphosphate. The protein operates within secondary metabolite biosynthesis; terpenoid biosynthesis. In terms of biological role, involved in the biosynthesis of phenolic monoterpenes natural products. Monoterpene synthase which catalyzes the conversion of geranyl diphosphate (GPP) to alpha-terpineol (isomer is not determined). The chain is Alpha-terpineol synthase, chloroplastic from Thymus caespititius (Cretan thyme).